Reading from the N-terminus, the 612-residue chain is Apoptosis-inducing factor 1, mitochondrial (612 aa).

Short sequence motifs (mitochondrial localization signal) lie at residues 1 to 30 (MFRC…PKQR) and 62 to 88 (KMDN…KTIK). The transit peptide at 1 to 54 (MFRCGGLAGAFKQKLVPLVRTVYVQRPKQRNRLPGNLFQQWRVPLELQMARQMA) directs the protein to the mitochondrion. Positions 55–101 (SSGSSGGKMDNSVLVLIVGLSTIGAGAYAYKTIKEDQKRYNERVMGL) are cleaved as a propeptide — removed in mature form. N6-succinyllysine is present on Lys-108. Residue Ser-115 is modified to Phosphoserine. The tract at residues 133 to 482 (FLLIGGGTAA…KPYWHQSMFW (350 aa)) is FAD-dependent oxidoreductase. Residues 137–141 (GGGTA), 163–164 (ED), Arg-171, and Lys-176 each bind FAD. Trp-195 lines the NAD(+) pocket. Val-232 contributes to the FAD binding site. A Glycyl lysine isopeptide (Lys-Gly) (interchain with G-Cter in ubiquitin) cross-link involves residue Lys-254. Ser-267 bears the Phosphoserine mark. Position 284 (Arg-284) interacts with FAD. Residues 307–310 (GGFL), Glu-335, and Lys-341 each bind NAD(+). Ser-370 bears the Phosphoserine mark. Residue Lys-387 is modified to N6-acetyllysine. Residue Gly-398 coordinates NAD(+). Asp-437 contacts FAD. Positions 445–450 (KLGRRR) match the Nuclear localization signal motif. Residues 452-453 (EH), Trp-482, and Glu-492 each bind NAD(+). FAD-binding positions include 453-454 (HH) and Trp-482. Polar residues predominate over residues 512 to 528 (AQDNPKSATEQSGTGIR). The disordered stretch occupies residues 512–551 (AQDNPKSATEQSGTGIRSESETESEASEITIPPSAPAVPQ). Residue Thr-520 is modified to Phosphothreonine. A phosphoserine mark is found at Ser-523 and Ser-529. Asn-582 provides a ligand contact to NAD(+). Position 592 is an N6-acetyllysine (Lys-592).

It belongs to the FAD-dependent oxidoreductase family. As to quaternary structure, monomer (oxidized form). Homodimer (reduced form). Upon reduction with NADH, undergoes dimerization and forms tight, long-lived FADH2-NAD charge transfer complexes (CTC) resistant to oxidation. Also dimerizes with isoform 3 preventing its release from mitochondria. Interacts with XIAP/BIRC4. Interacts (via N-terminus) with EIF3G (via C-terminus). Interacts with PRELID1. Interacts with CHCHD4; the interaction increases in presence of NADH. Interacts with processed form of PARP1 (Poly [ADP-ribose] polymerase 1, processed C-terminus); interaction is mediated with poly-ADP-ribose chains attached to PARP1, promoting translocation into the nucleus. Requires FAD as cofactor. Under normal conditions, a 54-residue N-terminal segment is first proteolytically removed during or just after translocation into the mitochondrial intermembrane space (IMS) by the mitochondrial processing peptidase (MPP) to form the inner-membrane-anchored mature form (AIFmit). During apoptosis, it is further proteolytically processed at amino-acid position 101 leading to the generation of the mature form, which is confined to the mitochondrial IMS in a soluble form (AIFsol). AIFsol is released to the cytoplasm in response to specific death signals, and translocated to the nucleus, where it induces nuclear apoptosis in a caspase-independent manner. Post-translationally, ubiquitination by XIAP/BIRC4 does not lead to proteasomal degradation. Ubiquitination at Lys-254 by XIAP/BIRC4 blocks its ability to bind DNA and induce chromatin degradation, thereby inhibiting its ability to induce cell death. Expressed in cortical neurons (at protein level). In terms of tissue distribution, expressed in liver (at protein level).

The protein localises to the mitochondrion intermembrane space. Its subcellular location is the mitochondrion inner membrane. It localises to the cytoplasm. The protein resides in the nucleus. It is found in the perinuclear region. The protein localises to the mitochondrion. Its subcellular location is the cytosol. The catalysed reaction is A + NADH + H(+) = AH2 + NAD(+). Functions both as NADH oxidoreductase and as regulator of apoptosis. In response to apoptotic stimuli, it is released from the mitochondrion intermembrane space into the cytosol and to the nucleus, where it functions as a proapoptotic factor in a caspase-independent pathway. Release into the cytoplasm is mediated upon binding to poly-ADP-ribose chains. The soluble form (AIFsol) found in the nucleus induces 'parthanatos' i.e. caspase-independent fragmentation of chromosomal DNA. Binds to DNA in a sequence-independent manner. Interacts with EIF3G, and thereby inhibits the EIF3 machinery and protein synthesis, and activates caspase-7 to amplify apoptosis. Plays a critical role in caspase-independent, pyknotic cell death in hydrogen peroxide-exposed cells. In contrast, participates in normal mitochondrial metabolism. Plays an important role in the regulation of respiratory chain biogenesis by interacting with CHCHD4 and controlling CHCHD4 mitochondrial import. The polypeptide is Apoptosis-inducing factor 1, mitochondrial (Mus musculus (Mouse)).